The chain runs to 693 residues: Heat shock protein homolog SSE1 (693 aa).

Serine 2 bears the N-acetylserine mark. Lysine 195 participates in a covalent cross-link: Glycyl lysine isopeptide (Lys-Gly) (interchain with G-Cter in ubiquitin). Position 242 is a phosphothreonine (threonine 242). Residues 653–693 (IRSKQEASQMAAMAEKLAAQRKAEAEKKEEKKDTEGDVDMD) form a disordered region. Position 660 is a phosphoserine (serine 660). The segment covering 673-687 (RKAEAEKKEEKKDTE) has biased composition (basic and acidic residues).

The protein belongs to the heat shock protein 70 family.

Its subcellular location is the cytoplasm. Its function is as follows. Has a calcium-dependent calmodulin-binding activity. Required for normal growth at various temperatures. The sequence is that of Heat shock protein homolog SSE1 (SSE1) from Saccharomyces cerevisiae (strain ATCC 204508 / S288c) (Baker's yeast).